The chain runs to 81 residues: Photosystem I iron-sulfur center (81 aa).

4Fe-4S ferredoxin-type domains lie at 2–31 and 39–68; these read SHSV…MIPW and IASA…VRVY. The [4Fe-4S] cluster site is built by cysteine 11, cysteine 14, cysteine 17, cysteine 21, cysteine 48, cysteine 51, cysteine 54, and cysteine 58.

In terms of assembly, the eukaryotic PSI reaction center is composed of at least 11 subunits. [4Fe-4S] cluster serves as cofactor.

Its subcellular location is the plastid. It localises to the chloroplast thylakoid membrane. The catalysed reaction is reduced [plastocyanin] + hnu + oxidized [2Fe-2S]-[ferredoxin] = oxidized [plastocyanin] + reduced [2Fe-2S]-[ferredoxin]. In terms of biological role, apoprotein for the two 4Fe-4S centers FA and FB of photosystem I (PSI); essential for photochemical activity. FB is the terminal electron acceptor of PSI, donating electrons to ferredoxin. The C-terminus interacts with PsaA/B/D and helps assemble the protein into the PSI complex. Required for binding of PsaD and PsaE to PSI. PSI is a plastocyanin-ferredoxin oxidoreductase, converting photonic excitation into a charge separation, which transfers an electron from the donor P700 chlorophyll pair to the spectroscopically characterized acceptors A0, A1, FX, FA and FB in turn. This Helianthus annuus (Common sunflower) protein is Photosystem I iron-sulfur center.